We begin with the raw amino-acid sequence, 647 residues long: MLTWKNNLTPVSEQFDDIYFSPENGLEETKHVFIKGNDLYNRWRNWNIQNAFCILELGFGTGLNFLTTWKEYLEYKDRFRLHFISIEKFPLNREEISKALSIFSELVEIKKEFLSSYQDLIPGMNYFQFLGGKIHFSLFLGDVSSALCEISGKVDAIFLDGFAPSKNPEMWDKSVLENLKYVSKKGTTLSTFTVARMVRDSLSFSGFKLEKRPGFGRKREMLIGSYSDSFLESNPKEKPWCKRAYPELQIKTVAIVGAGIAGTTLAYSLSRRGIQVFLIDPSGIAKETSGIPMAISHPHLTKIPGPISLFTLRAFRYALSFLSSFADQNFFEKTGLFHSVTQEMDSERLQKGIENHKLSEEIVFWKPIASKFQNGDFLENEPGVFFRNGFWTRPESIAKKCAEQPGVEFIKGTASRIEQDGTSWKLLIQESGHEIVANSIIFCNSHSIGKLIASLFEGEEPFPIRKVRGQLISLKETEKSSRISNILCAEHYLTPSILGEHILGSTFDEFDLNPLPQKKDTDRLLEFVQNKYPSLNFDSSCVLIEKVGLRAQTPDRLPILGPVFDPREFRKIYKEIDLPKNRNKKFPNLKTIQGLYVFGGLGSRGILSSFLGSEIMASLILGEPVPVESSVLEHLHPARFLYRKVRK.

The interval 1-227 (MLTWKNNLTP…KREMLIGSYS (227 aa)) is tRNA (mnm(5)s(2)U34)-methyltransferase. The interval 256–647 (VGAGIAGTTL…ARFLYRKVRK (392 aa)) is FAD-dependent cmnm(5)s(2)U34 oxidoreductase.

This sequence in the N-terminal section; belongs to the methyltransferase superfamily. tRNA (mnm(5)s(2)U34)-methyltransferase family. In the C-terminal section; belongs to the DAO family. It depends on FAD as a cofactor.

The protein localises to the cytoplasm. It catalyses the reaction 5-aminomethyl-2-thiouridine(34) in tRNA + S-adenosyl-L-methionine = 5-methylaminomethyl-2-thiouridine(34) in tRNA + S-adenosyl-L-homocysteine + H(+). In terms of biological role, catalyzes the last two steps in the biosynthesis of 5-methylaminomethyl-2-thiouridine (mnm(5)s(2)U) at the wobble position (U34) in tRNA. Catalyzes the FAD-dependent demodification of cmnm(5)s(2)U34 to nm(5)s(2)U34, followed by the transfer of a methyl group from S-adenosyl-L-methionine to nm(5)s(2)U34, to form mnm(5)s(2)U34. In Leptospira interrogans serogroup Icterohaemorrhagiae serovar Lai (strain 56601), this protein is tRNA 5-methylaminomethyl-2-thiouridine biosynthesis bifunctional protein MnmC.